The sequence spans 145 residues: uncharacterized protein (145 aa).

This is an uncharacterized protein from Saccharomyces cerevisiae (strain ATCC 204508 / S288c) (Baker's yeast).